Reading from the N-terminus, the 63-residue chain is Large ribosomal subunit protein uL30 (63 aa).

Belongs to the universal ribosomal protein uL30 family. Part of the 50S ribosomal subunit.

The chain is Large ribosomal subunit protein uL30 from Rickettsia prowazekii (strain Madrid E).